We begin with the raw amino-acid sequence, 331 residues long: Ketol-acid reductoisomerase (NADP(+)) (331 aa).

The KARI N-terminal Rossmann domain maps to Ala2 to Thr182. Residues Tyr25 to Gln28, Ser51, Ser53, and Asp83 to Gln86 contribute to the NADP(+) site. His108 is an active-site residue. Gly134 is an NADP(+) binding site. A KARI C-terminal knotted domain is found at Thr183–Leu328. Asp191, Glu195, Glu227, and Glu231 together coordinate Mg(2+). Ser252 contacts substrate.

It belongs to the ketol-acid reductoisomerase family. Mg(2+) is required as a cofactor.

The enzyme catalyses (2R)-2,3-dihydroxy-3-methylbutanoate + NADP(+) = (2S)-2-acetolactate + NADPH + H(+). It catalyses the reaction (2R,3R)-2,3-dihydroxy-3-methylpentanoate + NADP(+) = (S)-2-ethyl-2-hydroxy-3-oxobutanoate + NADPH + H(+). The protein operates within amino-acid biosynthesis; L-isoleucine biosynthesis; L-isoleucine from 2-oxobutanoate: step 2/4. Its pathway is amino-acid biosynthesis; L-valine biosynthesis; L-valine from pyruvate: step 2/4. Its function is as follows. Involved in the biosynthesis of branched-chain amino acids (BCAA). Catalyzes an alkyl-migration followed by a ketol-acid reduction of (S)-2-acetolactate (S2AL) to yield (R)-2,3-dihydroxy-isovalerate. In the isomerase reaction, S2AL is rearranged via a Mg-dependent methyl migration to produce 3-hydroxy-3-methyl-2-ketobutyrate (HMKB). In the reductase reaction, this 2-ketoacid undergoes a metal-dependent reduction by NADPH to yield (R)-2,3-dihydroxy-isovalerate. The polypeptide is Ketol-acid reductoisomerase (NADP(+)) (Nostoc punctiforme (strain ATCC 29133 / PCC 73102)).